The chain runs to 122 residues: Flagellar protein FliT (122 aa).

Residues 1 to 50 (MERQQQLLAAYQQIHSLSSQMIALAQTERWEDLVELELAYVTAVESTAAF) form a required for homodimerization region. Positions 60–98 (LQELLRNKLQQILDNETELKRLLQQRMDQLKELIGQSTR) are fliD binding.

Belongs to the FliT family. In terms of assembly, homodimer. Interacts with FliD and FlhC.

The protein resides in the cytoplasm. It localises to the cytosol. Dual-function protein that regulates the transcription of class 2 flagellar operons and that also acts as an export chaperone for the filament-capping protein FliD. As a transcriptional regulator, acts as an anti-FlhDC factor; it directly binds FlhC, thus inhibiting the binding of the FlhC/FlhD complex to class 2 promoters, resulting in decreased expression of class 2 flagellar operons. As a chaperone, effects FliD transition to the membrane by preventing its premature polymerization, and by directing it to the export apparatus. This Serratia proteamaculans (strain 568) protein is Flagellar protein FliT.